Reading from the N-terminus, the 388-residue chain is Putative C-&gt;U-editing enzyme APOBEC-4 (388 aa).

The 117-residue stretch at 60–176 (PQTKHLTFYE…AWNREALRGL (117 aa)) folds into the CMP/dCMP-type deaminase domain. H92 is a binding site for Zn(2+). E94 (proton donor) is an active-site residue. Zn(2+)-binding residues include C126 and C133. Residues 322-356 (KVKALRKSPSGRPVKKEEARKGSTRSQEANETNKS) are disordered.

The protein belongs to the cytidine and deoxycytidylate deaminase family. It depends on Zn(2+) as a cofactor.

In terms of biological role, putative C to U editing enzyme whose physiological substrate is not yet known. In Rattus norvegicus (Rat), this protein is Putative C-&gt;U-editing enzyme APOBEC-4 (Apobec4).